A 438-amino-acid polypeptide reads, in one-letter code: Tol-Pal system protein TolB (438 aa).

An N-terminal signal peptide occupies residues 1 to 21 (MVKRSLLVLALLICLPATLFA).

This sequence belongs to the TolB family. As to quaternary structure, the Tol-Pal system is composed of five core proteins: the inner membrane proteins TolA, TolQ and TolR, the periplasmic protein TolB and the outer membrane protein Pal. They form a network linking the inner and outer membranes and the peptidoglycan layer.

It localises to the periplasm. Functionally, part of the Tol-Pal system, which plays a role in outer membrane invagination during cell division and is important for maintaining outer membrane integrity. The chain is Tol-Pal system protein TolB from Desulfosudis oleivorans (strain DSM 6200 / JCM 39069 / Hxd3) (Desulfococcus oleovorans).